The following is a 1169-amino-acid chain: DNA-directed RNA polymerase subunit beta (1169 aa).

This sequence belongs to the RNA polymerase beta chain family. In terms of assembly, the RNAP catalytic core consists of 2 alpha, 1 beta, 1 beta' and 1 omega subunit. When a sigma factor is associated with the core the holoenzyme is formed, which can initiate transcription. Interacts with RbpA, which partially restores Rif-inhibited transcription.

It catalyses the reaction RNA(n) + a ribonucleoside 5'-triphosphate = RNA(n+1) + diphosphate. DNA-dependent RNA polymerase catalyzes the transcription of DNA into RNA using the four ribonucleoside triphosphates as substrates. This subunit often mutates to generate rifampicin (Rif) resistance. Interaction with RbpA partially restores Rif-inhibited transcription; once the subunit is Rif-resistant however RbpA no longer stimulates transcription. The protein is DNA-directed RNA polymerase subunit beta of Mycolicibacterium smegmatis (strain ATCC 700084 / mc(2)155) (Mycobacterium smegmatis).